Here is a 293-residue protein sequence, read N- to C-terminus: 4-diphosphocytidyl-2-C-methyl-D-erythritol kinase (293 aa).

The active site involves K16. 99–109 serves as a coordination point for ATP; sequence PMGAGLGGGSS. The active site involves D141.

This sequence belongs to the GHMP kinase family. IspE subfamily.

It catalyses the reaction 4-CDP-2-C-methyl-D-erythritol + ATP = 4-CDP-2-C-methyl-D-erythritol 2-phosphate + ADP + H(+). Its pathway is isoprenoid biosynthesis; isopentenyl diphosphate biosynthesis via DXP pathway; isopentenyl diphosphate from 1-deoxy-D-xylulose 5-phosphate: step 3/6. Functionally, catalyzes the phosphorylation of the position 2 hydroxy group of 4-diphosphocytidyl-2C-methyl-D-erythritol. This chain is 4-diphosphocytidyl-2-C-methyl-D-erythritol kinase, found in Burkholderia mallei (strain NCTC 10247).